The chain runs to 66 residues: uncharacterized protein (66 aa).

Low complexity predominate over residues 1-18 (MSTTSSSSTFSTRTASLS). A disordered region spans residues 1-22 (MSTTSSSSTFSTRTASLSQSYT).

This is an uncharacterized protein from Schizosaccharomyces pombe (strain 972 / ATCC 24843) (Fission yeast).